A 432-amino-acid polypeptide reads, in one-letter code: Homogentisate 1,2-dioxygenase (432 aa).

His-286 acts as the Proton acceptor in catalysis. Fe cation is bound by residues His-329 and Glu-335. Homogentisate-binding residues include Tyr-344 and His-365. Residue His-365 coordinates Fe cation.

Belongs to the homogentisate dioxygenase family. As to quaternary structure, hexamer; dimer of trimers. The cofactor is Fe cation.

The enzyme catalyses homogentisate + O2 = 4-maleylacetoacetate + H(+). It participates in amino-acid degradation; L-phenylalanine degradation; acetoacetate and fumarate from L-phenylalanine: step 4/6. Its function is as follows. Involved in the catabolism of homogentisate (2,5-dihydroxyphenylacetate or 2,5-OH-PhAc), a central intermediate in the degradation of phenylalanine and tyrosine. Catalyzes the oxidative ring cleavage of the aromatic ring of homogentisate to yield maleylacetoacetate. The polypeptide is Homogentisate 1,2-dioxygenase (Bordetella pertussis (strain Tohama I / ATCC BAA-589 / NCTC 13251)).